Here is a 180-residue protein sequence, read N- to C-terminus: Nucleoid-associated protein At4g30620, chloroplastic (180 aa).

A chloroplast-targeting transit peptide spans 1 to 48 (MASTATNTDFFKTLLSPFSNGNAAQRSSRQNIVWLNRKQSGNNNRSLR). The segment at 45 to 65 (RSLRVNGLFGGGKKDNKEDGQ) is disordered. The segment covering 56 to 65 (GKKDNKEDGQ) has biased composition (basic and acidic residues).

This sequence belongs to the YbaB/EbfC family. In terms of assembly, homodimer. Binds to the translation initiation factors TIF3E1.

It is found in the plastid. The protein resides in the chloroplast. Binds to DNA and alters its conformation. May be involved in regulation of gene expression, nucleoid organization and DNA protection. The polypeptide is Nucleoid-associated protein At4g30620, chloroplastic (Arabidopsis thaliana (Mouse-ear cress)).